We begin with the raw amino-acid sequence, 290 residues long: Probable endonuclease 4 (290 aa).

9 residues coordinate Zn(2+): His66, His106, Glu143, Asp179, His182, His216, Asp229, His231, and Glu261.

It belongs to the AP endonuclease 2 family. The cofactor is Zn(2+).

The enzyme catalyses Endonucleolytic cleavage to 5'-phosphooligonucleotide end-products.. Endonuclease IV plays a role in DNA repair. It cleaves phosphodiester bonds at apurinic or apyrimidinic (AP) sites, generating a 3'-hydroxyl group and a 5'-terminal sugar phosphate. The sequence is that of Probable endonuclease 4 from Solibacter usitatus (strain Ellin6076).